Reading from the N-terminus, the 1478-residue chain is MPFEQTQLFCDEKQTILKKIDTRNEIPDTIKSIPIPKISEAGFHYEPKNVNICLPKINIPNEILMKHEVEKYRKLFQSKPQTARKSVSVRTVSCAKGCAQRCESERAEDEAGKMCAKILNFTCSKCQDRTQYSPNDLQKHFEMWHHGELPSFPCEMCSFSASDFQIFKQHRKTHRNTFVKCDICNSERSYTLLDLTKHFTSKHCVNGNFQCEECRFFTQDVGTFVQHIHRHKEVHYKCGKCHHLCFTKGELQKHLRVHSGTLPFTCHYCSYGAIHKDQLVRHVITLHKEHLYAKEKLERDQYDKRVAKTTTGLKLILKRYKIGPTKTFWKRKTIASGNDESIGKNAQAFNIVSKTQTKSEDQSQEQLNEEKGGRQHCEDGDKPIESGSEKATVLSTGQCNKADEGASAPSSVLSAVQGPTVLLVRNNKITIPANYSAKFMGFKMVDGRQHIVIKLLPANKQILPSPALQPNTEKESTANLPPQAMDNTGFATGLTAMNDTDFVKAAPLSCSSPELPRKVISEKETAFISEKNNMLQMVDDSKSVTSLPTPSESVTSVRLTTKVEARDNVDLWENPSTQSHPDLIGTSINSPDKVNLTIRPNAYSCGDMHNYCINYVNSELPAESSNCFEFSNQGSLPFHNYSKVNNKRRRFSRGAVCENLQRESSNKTVTQQSTSDSDTTSPLRKESSNSDSLLASISPLSGTLKIKTEIEEPCDLEETQNFNEQSLFTNENQNLLNMTEEPKWDDIPCAGSPMMPRITSVFSLQSEQASEFLPPEVNQLLQDTLKPRSDIKEDSNNIPSKNLPLDCDQTLKKSKEEVIKSSKDFQMQDIISVPSASVGVNVPANDLNLKCNGQEKQALSVLQDVRDPGVTTKIPSIITLLKTQSDAIITQQLVKDKLRTTTQHSGPVYVQNPLLTSEQKNPVFVQTPKGFIIPLHVANKPGLHVFSGRPVPLVNTQSVPAALLVNKKPGVVLTVNNGKPEGVPTVKTENVHSYGTVTKEPCRTPFLKAEHNRYCLTPGLCSSIGSCVNMKTCSENTLPLKGSYIIKTSVSSSVKAVPFANVLPEQQGPNVNVLDAVKQQNESLPKASLYTLMPDGKQAVFFKCMMPNNTKLLKPRLVQNSTYQRIQPKRPAGAPQKILLKIFNPVLSMSAVNNLSVGNSASSFQKEIVPSKPTVHGEQKVPQSSRDALPVSVQDLMPANEAVLSSTAACPGSSEEPVHISERSETRVSRSKANCTIERNFNKRKTCKNKFAKIKTRISQDSETAFVSRNRSCKRKYIDNYQEPPRKKSATHRKCKERANAEDVQETFGFSRPRLPKDSGRTLRLFPFNSEQLVKCPRRNQPVVVLNHPDADAPEVERVMKTITKFNGRVLKVSLSKATINALLKPVSITSETTYSDFSKRHKMLKPVNSVKERFVLKLTLKKTSKNNYQIVKTTSEDVLKSKFNCWFCGRVFDNQDVWAGHGQRHLVEATKDWNMLE.

4 consecutive C2H2-type zinc fingers follow at residues 152-174 (FPCE…RKTH), 209-231 (FQCE…IHRH), 236-258 (YKCG…LRVH), and 264-287 (FTCH…ITLH). The interval 355-394 (TQTKSEDQSQEQLNEEKGGRQHCEDGDKPIESGSEKATVL) is disordered. Residue K358 forms a Glycyl lysine isopeptide (Lys-Gly) (interchain with G-Cter in SUMO2) linkage. Over residues 368-388 (NEEKGGRQHCEDGDKPIESGS) the composition is skewed to basic and acidic residues. Glycyl lysine isopeptide (Lys-Gly) (interchain with G-Cter in SUMO2) cross-links involve residues K390 and K428. The segment at 464–484 (PSPALQPNTEKESTANLPPQA) is disordered. K518 is covalently cross-linked (Glycyl lysine isopeptide (Lys-Gly) (interchain with G-Cter in SUMO2)). The residue at position 652 (S652) is a Phosphoserine. The disordered stretch occupies residues 656–694 (VCENLQRESSNKTVTQQSTSDSDTTSPLRKESSNSDSLL). The span at 670 to 681 (TQQSTSDSDTTS) shows a compositional bias: low complexity. Residues K707, K792, K882, K895, K987, K1008, K1041, K1055, K1078, K1180, and K1441 each participate in a glycyl lysine isopeptide (Lys-Gly) (interchain with G-Cter in SUMO2) cross-link. Residues 1444-1466 (FNCWFCGRVFDNQDVWAGHGQRH) form a C2H2-type 5 zinc finger.

It belongs to the krueppel C2H2-type zinc-finger protein family.

The protein resides in the nucleus. In terms of biological role, through its association with the EHMT1-EHMT2/G9A and PRC2/EED-EZH2 histone methyltransferase complexes may function in gene silencing, regulating repressive post-translational methylation of histone tails at promoters of target genes. In Rattus norvegicus (Rat), this protein is Zinc finger protein 518A (Znf518a).